Consider the following 544-residue polypeptide: Ribosomal protein S6 kinase-like 1 (544 aa).

Positions 87 to 115 (VHVDPNKERREAVKLKITKYLRRAEEIFN) constitute an MIT domain. Residues 145 to 534 (SALEQLKGCR…TSRLKSHPFF (390 aa)) enclose the Protein kinase domain. Residues 151–159 (KGCRVVGII) and Lys-177 contribute to the ATP site. Disordered stretches follow at residues 262 to 344 (PAEL…HWVR) and 353 to 372 (AYGR…SLGS). Residues 303–313 (SRPSAVFSSDP) show a composition bias toward polar residues. Asp-407 functions as the Proton acceptor in the catalytic mechanism.

It belongs to the protein kinase superfamily. Ser/Thr protein kinase family. S6 kinase subfamily.

It carries out the reaction L-seryl-[protein] + ATP = O-phospho-L-seryl-[protein] + ADP + H(+). The catalysed reaction is L-threonyl-[protein] + ATP = O-phospho-L-threonyl-[protein] + ADP + H(+). This is Ribosomal protein S6 kinase-like 1 (Rps6kl1) from Mus musculus (Mouse).